Consider the following 546-residue polypeptide: Immunoglobulin heavy constant epsilon (546 aa).

Residues 1–499 (ASTQSPSVFP…EAPWTWTGLC (499 aa)) are Extracellular-facing. Ig-like domains are found at residues 6–103 (PSVF…KTFS), 112–210 (PTVK…KKCA), 214–318 (PRGV…TKTS), and 324–423 (PEVY…RAVS). 5 cysteine pairs are disulfide-bonded: Cys15/Cys105, Cys29/Cys85, Cys135/Cys193, Cys239/Cys299, and Cys345/Cys405. 7 N-linked (GlcNAc...) asparagine glycosylation sites follow: Asn21, Asn49, Asn99, Asn146, Asn252, Asn264, and Asn275. The chain crosses the membrane as a helical span at residues 500-520 (IFAALFLLSVSYSAAITLLMV). Residues 521-546 (QRFLSATRQGRPQTSLDYTNVLQPHA) lie on the Cytoplasmic side of the membrane.

The basic structural unit of both sIgE and mIgE molecules consists of two identical heavy chains and two identical light chains; disulfide-linked. N-terminal variable regions of the heavy and light chains form the antigen binding sites, whereas the C-terminal constant regions of the heavy chains interact with immune receptors to mediate effector functions. In terms of assembly, part of IgE antibody. Interacts (via CH3) with the alpha chain/FCE1RA of IgE Fc receptor complex. Interacts (via CH3 region) with FCER2 (via C-type lectin domain); this interaction regulates IgE homeostasis. As to quaternary structure, part of IgE B cell antigen receptor complex (BCR). The BCR complex consists of one mIgE molecule responsible for antigen binding, non-covalently associated with CD79A and CD79B signaling chains. Expressed in B lymphocytes stimulated with IL4 and CD40.

The protein localises to the secreted. The protein resides in the cell membrane. Constant region of immunoglobulin heavy chains. Immunoglobulins, also known as antibodies, are membrane-bound or secreted glycoproteins produced by B lymphocytes. In the recognition phase of humoral immunity, the membrane-bound immunoglobulins serve as receptors which, upon binding of a specific antigen, trigger the clonal expansion and differentiation of B lymphocytes into immunoglobulins-secreting plasma cells. Secreted immunoglobulins mediate the effector phase of humoral immunity, which results in the elimination of bound antigens. The antigen binding site is formed by the variable domain of one heavy chain, together with that of its associated light chain. Thus, each immunoglobulin has two antigen binding sites with remarkable affinity for a particular antigen. The variable domains are assembled by a process called V-(D)-J rearrangement and can then be subjected to somatic hypermutations which, after exposure to antigen and selection, allow affinity maturation for a particular antigen. In terms of biological role, constant region of secreted IgE, also known as the Fc region of IgE antibody. Mediates IgE effector functions on myeloid and lymphoid cells primarily via two Fc receptors, the high-affinity IgE Fc receptor complex/FCER1A:MS4A2:FCGR1A and the low-affinity FCER2 receptor, which upon antigen/allergen cross-linking initiate signaling pathways that lead to immune cell activation and differentiation. Triggers the immediate hypersensitivity response to allergens as a host defense mechanism against helminth parasites, pathogenic bacteria and venom toxicity. When dysregulated, it can elicit harmful life-threatening allergic and anaphylactic reactions. Stimulates the high-affinity IgE Fc receptor complex/FCER1A:MS4A2:FCGR1A on mast cells, basophils and eosinophils leading to secretion of vasoactive amines, lipid mediators and cytokines that contribute to inflammatory response, tissue remodeling and cytotoxicity against microbes. On macrophages, cross-linking of FCER2 by IgE immune complexes induces intracellular killing of parasites through activation of L-Arginine-nitric oxide pathway. Activates macrophages to kill tumor cells via antigen-specific antibody-dependent cytotoxicity (ADCC). Triggers differentiation of quiescent M0 macrophages toward M1 state and reprograms M2 macrophages toward a proinflammatory state with antitumor functions. Stimulates FCER2 on B cells and initiates IgE-dependent antigen uptake and presentation to T cells. Functionally, constant region of membrane-bound IgE (long mIgE), part of the B cell receptor complex (BCR). Upon antigen cross-linking triggers quick BCR signaling, ensuring survival of IgE-switched B cells and differentiation into plasma cells, thus regulating both primary and memory IgE responses. Its function is as follows. Constant region of membrane-bound IgE (short mIgE), part of the B cell receptor complex (BCR). Upon antigen cross-linking initiates slower but sustained BCR signaling that negatively regulates mature B cell proliferation. This chain is Immunoglobulin heavy constant epsilon, found in Homo sapiens (Human).